Reading from the N-terminus, the 638-residue chain is 2-isopropylmalate synthase (638 aa).

The region spanning 72 to 346 (PRWCSVDLRD…DPQLDLSNVP (275 aa)) is the Pyruvate carboxyltransferase domain. Residues aspartate 81, histidine 285, histidine 287, and asparagine 321 each coordinate Mg(2+). The regulatory domain stretch occupies residues 488 to 638 (VEQSGMTAAG…SAINRSQRQR (151 aa)).

The protein belongs to the alpha-IPM synthase/homocitrate synthase family. LeuA type 2 subfamily. Homodimer. The cofactor is Mg(2+).

It localises to the cytoplasm. It carries out the reaction 3-methyl-2-oxobutanoate + acetyl-CoA + H2O = (2S)-2-isopropylmalate + CoA + H(+). It functions in the pathway amino-acid biosynthesis; L-leucine biosynthesis; L-leucine from 3-methyl-2-oxobutanoate: step 1/4. Functionally, catalyzes the condensation of the acetyl group of acetyl-CoA with 3-methyl-2-oxobutanoate (2-ketoisovalerate) to form 3-carboxy-3-hydroxy-4-methylpentanoate (2-isopropylmalate). The chain is 2-isopropylmalate synthase from Bifidobacterium longum subsp. infantis (strain ATCC 15697 / DSM 20088 / JCM 1222 / NCTC 11817 / S12).